Reading from the N-terminus, the 511-residue chain is Maturase K (511 aa).

This sequence belongs to the intron maturase 2 family. MatK subfamily.

The protein localises to the plastid. The protein resides in the chloroplast. Its function is as follows. Usually encoded in the trnK tRNA gene intron. Probably assists in splicing its own and other chloroplast group II introns. The chain is Maturase K from Hordeum vulgare (Barley).